The primary structure comprises 1242 residues: DNA polymerase catalytic subunit (1242 aa).

Disordered regions lie at residues 14–38 (GAVA…RPPQ), 644–665 (LQSA…SSSS), and 1109–1162 (APQG…RKPP). Positions 653 to 665 (GVSPGSGSNSSSS) are enriched in low complexity. Over residues 1111–1125 (QGSSDNGDSVTTGVV) the composition is skewed to polar residues. The span at 1145–1155 (ESNRRGGEPAK) shows a compositional bias: basic and acidic residues.

The protein belongs to the DNA polymerase type-B family. In terms of assembly, forms a complex with the ssDNA-binding protein UL57, the DNA polymerase processivity factor UL44, and the alkaline exonuclease UL98. Interacts with the putative helicase-primase complex composed of UL70, UL102 and UL105 proteins; these interactions may coordinate leading and lagging strand DNA synthesis at the replication fork.

It localises to the host nucleus. The catalysed reaction is DNA(n) + a 2'-deoxyribonucleoside 5'-triphosphate = DNA(n+1) + diphosphate. Replicates viral genomic DNA in the late phase of lytic infection, producing long concatemeric DNA. The replication complex is composed of six viral proteins: the DNA polymerase, processivity factor, primase, primase-associated factor, helicase, and ssDNA-binding protein. This Homo sapiens (Human) protein is DNA polymerase catalytic subunit (UL54).